Here is a 430-residue protein sequence, read N- to C-terminus: Adenylosuccinate synthetase (430 aa).

Residues 12 to 18 (GDEGKGK) and 40 to 42 (GHT) contribute to the GTP site. Aspartate 13 serves as the catalytic Proton acceptor. 2 residues coordinate Mg(2+): aspartate 13 and glycine 40. Residues 13–16 (DEGK), 38–41 (NAGH), threonine 128, arginine 142, glutamine 223, threonine 238, and arginine 302 each bind IMP. Histidine 41 acts as the Proton donor in catalysis. 298 to 304 (TTTGRPR) is a substrate binding site. Residues arginine 304, 330–332 (SID), and 412–414 (SVG) contribute to the GTP site.

Belongs to the adenylosuccinate synthetase family. As to quaternary structure, homodimer. Mg(2+) is required as a cofactor.

Its subcellular location is the cytoplasm. The catalysed reaction is IMP + L-aspartate + GTP = N(6)-(1,2-dicarboxyethyl)-AMP + GDP + phosphate + 2 H(+). It functions in the pathway purine metabolism; AMP biosynthesis via de novo pathway; AMP from IMP: step 1/2. Its function is as follows. Plays an important role in the de novo pathway of purine nucleotide biosynthesis. Catalyzes the first committed step in the biosynthesis of AMP from IMP. This chain is Adenylosuccinate synthetase, found in Streptococcus equi subsp. zooepidemicus (strain H70).